The chain runs to 126 residues: Fluoride-specific ion channel FluC (126 aa).

4 consecutive transmembrane segments (helical) span residues 4-24 (SILA…FLGL), 36-56 (GTLA…ALFA), 68-88 (LIIT…AEVV), and 99-119 (AFAA…AGIA). Na(+) contacts are provided by glycine 75 and threonine 78.

Belongs to the fluoride channel Fluc/FEX (TC 1.A.43) family.

It is found in the cell inner membrane. It catalyses the reaction fluoride(in) = fluoride(out). With respect to regulation, na(+) is not transported, but it plays an essential structural role and its presence is essential for fluoride channel function. Functionally, fluoride-specific ion channel. Important for reducing fluoride concentration in the cell, thus reducing its toxicity. The chain is Fluoride-specific ion channel FluC from Chromobacterium violaceum (strain ATCC 12472 / DSM 30191 / JCM 1249 / CCUG 213 / NBRC 12614 / NCIMB 9131 / NCTC 9757 / MK).